Here is a 95-residue protein sequence, read N- to C-terminus: Aspartyl/glutamyl-tRNA(Asn/Gln) amidotransferase subunit C (95 aa).

Belongs to the GatC family. In terms of assembly, heterotrimer of A, B and C subunits.

It catalyses the reaction L-glutamyl-tRNA(Gln) + L-glutamine + ATP + H2O = L-glutaminyl-tRNA(Gln) + L-glutamate + ADP + phosphate + H(+). It carries out the reaction L-aspartyl-tRNA(Asn) + L-glutamine + ATP + H2O = L-asparaginyl-tRNA(Asn) + L-glutamate + ADP + phosphate + 2 H(+). Its function is as follows. Allows the formation of correctly charged Asn-tRNA(Asn) or Gln-tRNA(Gln) through the transamidation of misacylated Asp-tRNA(Asn) or Glu-tRNA(Gln) in organisms which lack either or both of asparaginyl-tRNA or glutaminyl-tRNA synthetases. The reaction takes place in the presence of glutamine and ATP through an activated phospho-Asp-tRNA(Asn) or phospho-Glu-tRNA(Gln). In Gluconacetobacter diazotrophicus (strain ATCC 49037 / DSM 5601 / CCUG 37298 / CIP 103539 / LMG 7603 / PAl5), this protein is Aspartyl/glutamyl-tRNA(Asn/Gln) amidotransferase subunit C.